We begin with the raw amino-acid sequence, 501 residues long: Adenylosuccinate synthetase 2, chloroplastic (501 aa).

GTP-binding positions include 87–93 (GDEGKGK) and 115–117 (GHT). D88 acts as the Proton acceptor in catalysis. 2 residues coordinate Mg(2+): D88 and G115. Residues 88–91 (DEGK), 113–116 (NAGH), T205, R219, Q300, T315, and R379 contribute to the IMP site. Catalysis depends on H116, which acts as the Proton donor. Residue 375–381 (NITGRPR) coordinates substrate. GTP is bound by residues R381, 407-409 (KLD), and 490-492 (GIG).

Belongs to the adenylosuccinate synthetase family. As to quaternary structure, homodimer. The cofactor is Mg(2+).

The protein resides in the plastid. The protein localises to the chloroplast. It catalyses the reaction IMP + L-aspartate + GTP = N(6)-(1,2-dicarboxyethyl)-AMP + GDP + phosphate + 2 H(+). Its pathway is purine metabolism; AMP biosynthesis via de novo pathway; AMP from IMP: step 1/2. Its function is as follows. Plays an important role in the de novo pathway and in the salvage pathway of purine nucleotide biosynthesis. Catalyzes the first committed step in the biosynthesis of AMP from IMP. This Capsicum frutescens (Cayenne pepper) protein is Adenylosuccinate synthetase 2, chloroplastic.